The primary structure comprises 777 residues: Zinc finger FYVE domain-containing protein 1 (777 aa).

The interval 416–777 (MAHSSFFPDE…FNCNKKPGDL (362 aa)) is required for localization in the lipid droplets. FYVE-type zinc fingers lie at residues 598 to 659 (NSQI…DARN) and 715 to 775 (DHEI…KKPG). Zn(2+) is bound by residues Cys-604, Cys-607, Cys-620, Cys-623, Cys-628, Cys-631, Cys-651, Cys-654, Cys-721, Cys-724, Cys-737, Cys-740, Cys-745, Cys-748, Cys-767, and Cys-770.

Interacts with RAB18 (in GTP-bound form). Interacts with BSCL2 in a RAB18-dependent manner. Interacts with ZW10. Ubiquitous.

Its subcellular location is the golgi apparatus. It is found in the golgi stack. The protein resides in the endoplasmic reticulum. The protein localises to the preautophagosomal structure. It localises to the lipid droplet. Its subcellular location is the mitochondrion. Plays a role in the formation of lipid droplets (LDs) which are storage organelles at the center of lipid and energy homeostasis. Regulates the morphology, size and distribution of LDs. Mediates the formation of endoplasmic reticulum-lipid droplets (ER-LD) contact sites by forming a complex with RAB18 and ZW10. Binds to phosphatidylinositol 3-phosphate (PtdIns3P) through FYVE-type zinc finger. This Mus musculus (Mouse) protein is Zinc finger FYVE domain-containing protein 1 (Zfyve1).